Consider the following 205-residue polypeptide: Holliday junction branch migration complex subunit RuvA (205 aa).

Residues 1-68 are domain I; sequence MIGYLEGTLL…QPKPVLIGFN (68 aa). Residues 69 to 146 form a domain II region; it reads TEEEKDFFHL…RFADAGHSSA (78 aa). Positions 147-151 are flexible linker; that stretch reads PDVPV. Residues 152-205 form a domain III region; the sequence is TGSLADQTVEVLVGQLGYKPNEARLMVAGALKRNPDVSTPEALFDEIFKHGQAQ.

Belongs to the RuvA family. Homotetramer. Forms an RuvA(8)-RuvB(12)-Holliday junction (HJ) complex. HJ DNA is sandwiched between 2 RuvA tetramers; dsDNA enters through RuvA and exits via RuvB. An RuvB hexamer assembles on each DNA strand where it exits the tetramer. Each RuvB hexamer is contacted by two RuvA subunits (via domain III) on 2 adjacent RuvB subunits; this complex drives branch migration. In the full resolvosome a probable DNA-RuvA(4)-RuvB(12)-RuvC(2) complex forms which resolves the HJ.

It is found in the cytoplasm. Functionally, the RuvA-RuvB-RuvC complex processes Holliday junction (HJ) DNA during genetic recombination and DNA repair, while the RuvA-RuvB complex plays an important role in the rescue of blocked DNA replication forks via replication fork reversal (RFR). RuvA specifically binds to HJ cruciform DNA, conferring on it an open structure. The RuvB hexamer acts as an ATP-dependent pump, pulling dsDNA into and through the RuvAB complex. HJ branch migration allows RuvC to scan DNA until it finds its consensus sequence, where it cleaves and resolves the cruciform DNA. In Desulfosudis oleivorans (strain DSM 6200 / JCM 39069 / Hxd3) (Desulfococcus oleovorans), this protein is Holliday junction branch migration complex subunit RuvA.